The sequence spans 261 residues: Cytochrome c oxidase subunit 3 (261 aa).

The Mitochondrial matrix segment spans residues 1 to 15; it reads MAHQAHAYHMVDPSP. A helical transmembrane segment spans residues 16-34; the sequence is WPLTGAIAALLMTSGLAIW. Residues 35–40 lie on the Mitochondrial intermembrane side of the membrane; the sequence is FHFHST. Residues 41–66 form a helical membrane-spanning segment; it reads TLMTLGLILLLLTMYQWWRDIIREGT. Residues 67 to 72 lie on the Mitochondrial matrix side of the membrane; sequence FQGHHT. The chain crosses the membrane as a helical span at residues 73–105; the sequence is PPVQKGLRYGMILFITSEVFFFLGFFWAFYHSS. Over 106-128 the chain is Mitochondrial intermembrane; sequence LAPTPELGGCWPPTGITPLDPFE. The helical transmembrane segment at 129 to 152 threads the bilayer; it reads VPLLNTAVLLASGVTVTWAHHSIM. Residues 153–155 lie on the Mitochondrial matrix side of the membrane; that stretch reads EGE. A helical transmembrane segment spans residues 156–183; the sequence is RKQAIQSLALTILLGFYFTALQAMEYYE. Residues 184–190 lie on the Mitochondrial intermembrane side of the membrane; sequence APFTIAD. The helical transmembrane segment at 191–223 threads the bilayer; the sequence is GVYGSTFFVATGFHGLHVIIGSTFLAVCLLRQI. Residues 224–232 lie on the Mitochondrial matrix side of the membrane; that stretch reads QYHFTSEHH. The chain crosses the membrane as a helical span at residues 233 to 256; it reads FGFEAAAWYWHFVDVVWLFLYVSI. Residues 257 to 261 lie on the Mitochondrial intermembrane side of the membrane; that stretch reads YWWGS.

This sequence belongs to the cytochrome c oxidase subunit 3 family. In terms of assembly, component of the cytochrome c oxidase (complex IV, CIV), a multisubunit enzyme composed of 14 subunits. The complex is composed of a catalytic core of 3 subunits MT-CO1, MT-CO2 and MT-CO3, encoded in the mitochondrial DNA, and 11 supernumerary subunits COX4I, COX5A, COX5B, COX6A, COX6B, COX6C, COX7A, COX7B, COX7C, COX8 and NDUFA4, which are encoded in the nuclear genome. The complex exists as a monomer or a dimer and forms supercomplexes (SCs) in the inner mitochondrial membrane with NADH-ubiquinone oxidoreductase (complex I, CI) and ubiquinol-cytochrome c oxidoreductase (cytochrome b-c1 complex, complex III, CIII), resulting in different assemblies (supercomplex SCI(1)III(2)IV(1) and megacomplex MCI(2)III(2)IV(2)).

The protein localises to the mitochondrion inner membrane. It carries out the reaction 4 Fe(II)-[cytochrome c] + O2 + 8 H(+)(in) = 4 Fe(III)-[cytochrome c] + 2 H2O + 4 H(+)(out). In terms of biological role, component of the cytochrome c oxidase, the last enzyme in the mitochondrial electron transport chain which drives oxidative phosphorylation. The respiratory chain contains 3 multisubunit complexes succinate dehydrogenase (complex II, CII), ubiquinol-cytochrome c oxidoreductase (cytochrome b-c1 complex, complex III, CIII) and cytochrome c oxidase (complex IV, CIV), that cooperate to transfer electrons derived from NADH and succinate to molecular oxygen, creating an electrochemical gradient over the inner membrane that drives transmembrane transport and the ATP synthase. Cytochrome c oxidase is the component of the respiratory chain that catalyzes the reduction of oxygen to water. Electrons originating from reduced cytochrome c in the intermembrane space (IMS) are transferred via the dinuclear copper A center (CU(A)) of subunit 2 and heme A of subunit 1 to the active site in subunit 1, a binuclear center (BNC) formed by heme A3 and copper B (CU(B)). The BNC reduces molecular oxygen to 2 water molecules using 4 electrons from cytochrome c in the IMS and 4 protons from the mitochondrial matrix. The polypeptide is Cytochrome c oxidase subunit 3 (mt-co3) (Carassius auratus (Goldfish)).